The following is a 318-amino-acid chain: NADH-ubiquinone oxidoreductase chain 1 (318 aa).

9 consecutive transmembrane segments (helical) span residues 2 to 22 (FLMN…FLTL), 37 to 57 (PNIV…KLFI), 69 to 89 (LMFT…WIPM), 100 to 120 (LGVL…LWSG), 136 to 156 (VAQT…IMMM), 171 to 191 (HMWL…STLA), 231 to 251 (IIMM…NPLF), 253 to 273 (ELFT…FLWV), and 293 to 313 (FLPL…LSAG).

This sequence belongs to the complex I subunit 1 family. As to quaternary structure, core subunit of respiratory chain NADH dehydrogenase (Complex I) which is composed of 45 different subunits.

It localises to the mitochondrion inner membrane. The catalysed reaction is a ubiquinone + NADH + 5 H(+)(in) = a ubiquinol + NAD(+) + 4 H(+)(out). Core subunit of the mitochondrial membrane respiratory chain NADH dehydrogenase (Complex I) which catalyzes electron transfer from NADH through the respiratory chain, using ubiquinone as an electron acceptor. Essential for the catalytic activity and assembly of complex I. The protein is NADH-ubiquinone oxidoreductase chain 1 (MT-ND1) of Euphractus sexcinctus (Six-banded armadillo).